Consider the following 586-residue polypeptide: MKQQIETLLNQAIERLKTKGVLKPEVTPVIKITHTTDPQHGDFATNLALTLSKAAGMSPHALAEKIVEALPPSGQITEVEIAGPGFINFFVTEGSYQTVVSSILKAGKDYGRSEMGKGQRVHMEYVSANPTGPLHVGHGRGAAYGACVANLLNAAGFEVHREYYVNDAGRQMGILALSVWVRYLQGYEASIELPKNAYQGEYIIDIAEALKAKYGKQFYHSVESIQAKIPEEIDSNADPEAYLDAWVTAQKDLLGPKDFECVFQAALDSILNDIKNDLEEFGVTYDDWFPESRLVREGLIQEGLDLLTKHGYVYEKNGAQWFRATALGDEKDRVLIRKNGLPTYFAADVAYHLHKFNQGYDQIIDIFGADHHGYIPRIRGFLKGLGKAPEKLHILLVQFAILYRGNEKVSMSTRGGTFVTLRELRHEVGNDAARFFYIMRKPDQHLDFDLELAKSQSNENPVYYIQYAHARICSVFRQLKTTQKNWDRPRGMENLSLLSTNYEKELLATLGRYPEVIKRAAMNYAPHLLAHYLQTLANQFHTYYNAERFLIEDDNLRNARLNLINAVQQIIRNGLTLLGVSAPEEM.

Positions 128-138 (ANPTGPLHVGH) match the 'HIGH' region motif.

Belongs to the class-I aminoacyl-tRNA synthetase family. In terms of assembly, monomer.

It is found in the cytoplasm. It carries out the reaction tRNA(Arg) + L-arginine + ATP = L-arginyl-tRNA(Arg) + AMP + diphosphate. This chain is Arginine--tRNA ligase, found in Coxiella burnetii (strain RSA 331 / Henzerling II).